The chain runs to 27 residues: Secretin (27 aa).

At valine 27 the chain carries Valine amide.

It belongs to the glucagon family.

The protein localises to the secreted. Hormone involved in different processes, such as regulation of the pH of the duodenal content, food intake and water homeostasis. Exerts its biological effects by binding to secretin receptor (SCTR), a G-protein coupled receptor expressed in the basolateral domain of several cells. Acts as a key gastrointestinal hormone by regulating the pH of the duodenal content. Secreted by S cells of the duodenum in the crypts of Lieberkuehn and regulates the pH of the duodenum by (1) inhibiting the secretion of gastric acid from the parietal cells of the stomach and (2) stimulating the production of bicarbonate (NaHCO(3)) from the ductal cells of the pancreas. Production of bicarbonate is essential to neutralize the pH and ensure no damage is done to the small intestine by the gastric acid. In addition to regulating the pH of the duodenal content, plays a central role in diet induced thermogenesis: acts as a non-sympathetic brown fat (BAT) activator mediating prandial thermogenesis, which consequentially induces satiation. Mechanistically, secretin released by the gut after a meal binds to secretin receptor (SCTR) in brown adipocytes, activating brown fat thermogenesis by stimulating lipolysis, which is sensed in the brain and promotes satiation. Also able to stimulate lipolysis in white adipocytes. Also plays an important role in cellular osmoregulation: released into the systemic circulation in response to hyperosmolality and acts at different levels in the hypothalamus, pituitary and kidney to regulate water homeostasis. Also plays a role in the central nervous system, possibly by acting as a neuropeptide hormone: required for hippocampal synaptic function and neural progenitor cells maintenance. The chain is Secretin from Bos taurus (Bovine).